A 303-amino-acid polypeptide reads, in one-letter code: Enoyl-CoA hydratase domain-containing protein 3, mitochondrial (303 aa).

Residues 1–17 (MAAVAVLRAFGASGPMC) constitute a mitochondrion transit peptide. Position 110 is an N6-succinyllysine (Lys-110).

Belongs to the enoyl-CoA hydratase/isomerase family. As to expression, expressed in adipocytes. Expressed in blood cells, with higher expression in patients with low coronary lesions.

Its subcellular location is the mitochondrion. Its function is as follows. May play a role in fatty acid biosynthesis and insulin sensitivity. This Homo sapiens (Human) protein is Enoyl-CoA hydratase domain-containing protein 3, mitochondrial.